The following is a 211-amino-acid chain: Protein-L-isoaspartate O-methyltransferase (211 aa).

S60 is a catalytic residue.

Belongs to the methyltransferase superfamily. L-isoaspartyl/D-aspartyl protein methyltransferase family.

The protein resides in the cytoplasm. It carries out the reaction [protein]-L-isoaspartate + S-adenosyl-L-methionine = [protein]-L-isoaspartate alpha-methyl ester + S-adenosyl-L-homocysteine. Its function is as follows. Catalyzes the methyl esterification of L-isoaspartyl residues in peptides and proteins that result from spontaneous decomposition of normal L-aspartyl and L-asparaginyl residues. It plays a role in the repair and/or degradation of damaged proteins. This chain is Protein-L-isoaspartate O-methyltransferase, found in Pseudomonas syringae pv. tomato (strain ATCC BAA-871 / DC3000).